Here is a 608-residue protein sequence, read N- to C-terminus: Actin-interacting protein 1 (608 aa).

11 WD repeats span residues 62 to 101 (EHSC…HLLK), 106 to 149 (PIAG…GEIS), 150 to 190 (GQSK…FKMT), 193 to 232 (DHSR…LVGE), 237 to 276 (AHKG…LVSE), 323 to 362 (GHNK…NDRI), 366 to 403 (GHGN…YTDY), 444 to 483 (PIKY…LEPK), 487 to 526 (DHLG…PAHN), 531 to 570 (FHSA…KHTI), and 575 to 607 (HPQS…HVEN).

The protein belongs to the WD repeat AIP1 family. Expressed in pupal wing cells.

The protein localises to the cytoplasm. The protein resides in the cytoskeleton. Its function is as follows. Induces disassembly of actin filaments in conjunction with ADF/cofilin family proteins. Together with GMF, promotes Arp2/3-nucleated actin filament array disassembly. Essential for organismal and cell viability. Required for the development of normal wing cell planar polarity. In egg chambers and together with GMF, plays an important role in directional migration of border cell clusters. The chain is Actin-interacting protein 1 (flr) from Drosophila melanogaster (Fruit fly).